The primary structure comprises 600 residues: MCGIVGYIGTEDAKEILLKGLEKLEYRGYDSAGIAVATEEGVHIFKEKGRIATLREVVDQGVKSTVGIGHTRWATHGEPSKVNAHPHQSESSRFTIVHNGVIENYEQLKRDYLQAVTLQSDTDTEVVVQLVERFVHEGQSVEAAFRHTLSLLKGSYAIALLDKKDTDTIYVGKNKSPLLVGVQDGVNVVASDAMAMLQVTDQFLEIMDEEIVIVTKDDVTIKTLDGTAVSREPYTAELDASDIEKGTYPHFMLKEIDEQPFVIRNIIQKYQNEDGSVRLDEDIRQAVMEADRIYIIAAGTSYHAGLVGKQLIENFAKQPVEVHIASEFLYNMPLLSKRPLFIFISQSGETADSRGVLVEVKKLGYKALTITNVPGSTLSREADFTLHTHAGPEIAVASTKAYTAQMAVLTLLAADTAKAKGIDLGFDPIQELSIVANAMETLCNQKETLEKIARDYLAVTRNCFFIGRATDYFVCLEGALKLKEISYIQAEGFAGGELKHGTIALIEEGTPIVALATQEHVNLSIRGNVKEVAARGAFPCIISMEGLNEEDDTFVLPKVHSHLTPLVSVIPLQLIAYYAALHRGCDVDKPRNLAKSVTVE.

Residue C2 is the Nucleophile; for GATase activity of the active site. The region spanning 2-217 (CGIVGYIGTE…DEEIVIVTKD (216 aa)) is the Glutamine amidotransferase type-2 domain. SIS domains follow at residues 283-422 (IRQA…AKGI) and 452-590 (IARD…VDKP). K595 functions as the For Fru-6P isomerization activity in the catalytic mechanism.

In terms of assembly, homodimer.

The protein resides in the cytoplasm. It catalyses the reaction D-fructose 6-phosphate + L-glutamine = D-glucosamine 6-phosphate + L-glutamate. In terms of biological role, catalyzes the first step in hexosamine metabolism, converting fructose-6P into glucosamine-6P using glutamine as a nitrogen source. This Halalkalibacterium halodurans (strain ATCC BAA-125 / DSM 18197 / FERM 7344 / JCM 9153 / C-125) (Bacillus halodurans) protein is Glutamine--fructose-6-phosphate aminotransferase [isomerizing].